Here is a 372-residue protein sequence, read N- to C-terminus: tRNA 2-selenouridine synthase (372 aa).

Positions L19 to D142 constitute a Rhodanese domain. C102 acts as the S-selanylcysteine intermediate in catalysis.

It belongs to the SelU family. As to quaternary structure, monomer.

The catalysed reaction is 5-methylaminomethyl-2-thiouridine(34) in tRNA + selenophosphate + (2E)-geranyl diphosphate + H2O + H(+) = 5-methylaminomethyl-2-selenouridine(34) in tRNA + (2E)-thiogeraniol + phosphate + diphosphate. It catalyses the reaction 5-methylaminomethyl-2-thiouridine(34) in tRNA + (2E)-geranyl diphosphate = 5-methylaminomethyl-S-(2E)-geranyl-thiouridine(34) in tRNA + diphosphate. It carries out the reaction 5-methylaminomethyl-S-(2E)-geranyl-thiouridine(34) in tRNA + selenophosphate + H(+) = 5-methylaminomethyl-2-(Se-phospho)selenouridine(34) in tRNA + (2E)-thiogeraniol. The enzyme catalyses 5-methylaminomethyl-2-(Se-phospho)selenouridine(34) in tRNA + H2O = 5-methylaminomethyl-2-selenouridine(34) in tRNA + phosphate. Involved in the post-transcriptional modification of the uridine at the wobble position (U34) of tRNA(Lys), tRNA(Glu) and tRNA(Gln). Catalyzes the conversion of 2-thiouridine (S2U-RNA) to 2-selenouridine (Se2U-RNA). Acts in a two-step process involving geranylation of 2-thiouridine (S2U) to S-geranyl-2-thiouridine (geS2U) and subsequent selenation of the latter derivative to 2-selenouridine (Se2U) in the tRNA chain. The polypeptide is tRNA 2-selenouridine synthase (Shewanella loihica (strain ATCC BAA-1088 / PV-4)).